A 435-amino-acid chain; its full sequence is Cyclin-dependent kinase 15 (435 aa).

One can recognise a Protein kinase domain in the interval 103-387; that stretch reads YLNLEKLGEG…AQEALVHDYF (285 aa). ATP is bound by residues 109–117 and K132; that span reads LGEGSYATV. Residue D224 is the Proton acceptor of the active site.

The protein belongs to the protein kinase superfamily. CMGC Ser/Thr protein kinase family. CDC2/CDKX subfamily. Mg(2+) is required as a cofactor.

It carries out the reaction L-seryl-[protein] + ATP = O-phospho-L-seryl-[protein] + ADP + H(+). The enzyme catalyses L-threonyl-[protein] + ATP = O-phospho-L-threonyl-[protein] + ADP + H(+). Serine/threonine-protein kinase that acts like an antiapoptotic protein that counters TRAIL/TNFSF10-induced apoptosis by inducing phosphorylation of BIRC5 at 'Thr-34'. The sequence is that of Cyclin-dependent kinase 15 (CDK15) from Homo sapiens (Human).